A 341-amino-acid polypeptide reads, in one-letter code: Cytoplasmic tRNA 2-thiolation protein 1 (341 aa).

This sequence belongs to the TtcA family. CTU1/NCS6/ATPBD3 subfamily.

The protein localises to the cytoplasm. It functions in the pathway tRNA modification; 5-methoxycarbonylmethyl-2-thiouridine-tRNA biosynthesis. Plays a central role in 2-thiolation of mcm(5)S(2)U at tRNA wobble positions of tRNA(Lys), tRNA(Glu) and tRNA(Gln). Directly binds tRNAs and probably acts by catalyzing adenylation of tRNAs, an intermediate required for 2-thiolation. It is unclear whether it acts as a sulfurtransferase that transfers sulfur from thiocarboxylated URM1 onto the uridine of tRNAs at wobble position. The chain is Cytoplasmic tRNA 2-thiolation protein 1 from Aedes aegypti (Yellowfever mosquito).